The primary structure comprises 672 residues: Poly-beta-1,6-N-acetyl-D-glucosamine N-deacetylase (672 aa).

Residues 1–20 (MLRNGNKYLLMLVSIIMLTA) form the signal peptide. The N-palmitoyl cysteine moiety is linked to residue Cys-21. Cys-21 is lipidated: S-diacylglycerol cysteine. Residues 107–349 (KAVVLTFDDG…IQRVKDMQIS (243 aa)) enclose the NodB homology domain.

The protein belongs to the polysaccharide deacetylase family.

Its subcellular location is the cell outer membrane. Catalyzes the N-deacetylation of poly-beta-1,6-N-acetyl-D-glucosamine (PGA), a biofilm adhesin polysaccharide. N-deacetylation promotes PGA export through the PgaA porin. The sequence is that of Poly-beta-1,6-N-acetyl-D-glucosamine N-deacetylase (pgaB) from Escherichia coli (strain K12).